The sequence spans 192 residues: Lipid A acyltransferase PagP (192 aa).

A signal peptide spans 1-26 (MTVVNKSFLTILIFFCQILFPLNASA). Active-site residues include H64, D107, and S108.

This sequence belongs to the lipid A palmitoyltransferase family. Homodimer.

Its subcellular location is the cell outer membrane. It catalyses the reaction a lipid A + a 1,2-diacyl-sn-glycero-3-phosphocholine = a hepta-acyl lipid A + a 2-acyl-sn-glycero-3-phosphocholine. It carries out the reaction a lipid IVA + a 1,2-diacyl-sn-glycero-3-phosphocholine = a lipid IVB + a 2-acyl-sn-glycero-3-phosphocholine. The catalysed reaction is a lipid IIA + a 1,2-diacyl-sn-glycero-3-phosphocholine = a lipid IIB + a 2-acyl-sn-glycero-3-phosphocholine. In terms of biological role, transfers a fatty acid residue from the sn-1 position of a phospholipid to the N-linked hydroxyfatty acid chain on the proximal unit of lipid A or its precursors. In Cronobacter sakazakii (strain ATCC BAA-894) (Enterobacter sakazakii), this protein is Lipid A acyltransferase PagP.